The primary structure comprises 309 residues: Glutaminase (309 aa).

7 residues coordinate substrate: serine 64, asparagine 114, glutamate 160, asparagine 167, tyrosine 191, tyrosine 243, and valine 261.

Belongs to the glutaminase family. Homotetramer.

It carries out the reaction L-glutamine + H2O = L-glutamate + NH4(+). The protein is Glutaminase of Methylorubrum extorquens (strain CM4 / NCIMB 13688) (Methylobacterium extorquens).